Consider the following 179-residue polypeptide: Large ribosomal subunit protein uL5 (179 aa).

In terms of assembly, contacts the P site tRNA. Forms a bridge to the 30S subunit in the 70S ribosome. Part of the 50S ribosomal subunit. Part of the 5S rRNA/L5/L18 subcomplex; in this organism only 2 proteins, L5 and L18 have been shown to be part of the 5S rRNA subcomplex, unlike E.coli and T.thermophilus where L25 (TL5) is also found. Has been shown to bind 5S rRNA.

Functionally, this is one of the proteins that bind and probably mediate the attachment of the 5S RNA into the large ribosomal subunit, where it forms part of the central protuberance. In the 70S ribosome it contacts protein S13 of the 30S subunit (bridge B1b), connecting the 2 subunits; this bridge is implicated in subunit movement. Contacts the P site tRNA; the 5S rRNA and some of its associated proteins might help stabilize positioning of ribosome-bound tRNAs. The sequence is that of Large ribosomal subunit protein uL5 (rplE) from Geobacillus stearothermophilus (Bacillus stearothermophilus).